Reading from the N-terminus, the 204-residue chain is Putative AgrB-like protein (204 aa).

The next 5 membrane-spanning stretches (helical) occupy residues 52-74 (YGIA…YLWL), 87-107 (LNCT…FQNI), 111-131 (NWIV…FAPA), 151-168 (AMIG…IPFA), and 173-190 (LIMV…PLTY).

It belongs to the AgrB family.

It is found in the cell membrane. May be involved in the proteolytic processing of a quorum sensing system signal molecule precursor. In Listeria monocytogenes serovar 1/2a (strain ATCC BAA-679 / EGD-e), this protein is Putative AgrB-like protein.